We begin with the raw amino-acid sequence, 344 residues long: Fructose-1,6-bisphosphatase class 1 (344 aa).

Mg(2+) contacts are provided by glutamate 107, aspartate 129, leucine 131, and aspartate 132. Substrate contacts are provided by asparagine 224, tyrosine 252, and lysine 282. Glutamate 288 contacts Mg(2+).

The protein belongs to the FBPase class 1 family. In terms of assembly, homotetramer. Mg(2+) serves as cofactor.

It localises to the cytoplasm. It carries out the reaction beta-D-fructose 1,6-bisphosphate + H2O = beta-D-fructose 6-phosphate + phosphate. It functions in the pathway carbohydrate biosynthesis; Calvin cycle. The chain is Fructose-1,6-bisphosphatase class 1 from Synechococcus sp. (strain ATCC 27144 / PCC 6301 / SAUG 1402/1) (Anacystis nidulans).